A 50-amino-acid polypeptide reads, in one-letter code: uncharacterized protein (50 aa).

The chain crosses the membrane as a helical span at residues 5 to 19; sequence IIIIVIVIIIFFFYL. A coiled-coil region spans residues 19-50; that stretch reads LKQKKLTNCETQVVKVQKDIDEINLKLKKLNK.

It localises to the membrane. This is an uncharacterized protein from Acheta domesticus (House cricket).